Reading from the N-terminus, the 250-residue chain is Leucyl/phenylalanyl-tRNA--protein transferase (250 aa).

It belongs to the L/F-transferase family.

The protein localises to the cytoplasm. The enzyme catalyses N-terminal L-lysyl-[protein] + L-leucyl-tRNA(Leu) = N-terminal L-leucyl-L-lysyl-[protein] + tRNA(Leu) + H(+). The catalysed reaction is N-terminal L-arginyl-[protein] + L-leucyl-tRNA(Leu) = N-terminal L-leucyl-L-arginyl-[protein] + tRNA(Leu) + H(+). It catalyses the reaction L-phenylalanyl-tRNA(Phe) + an N-terminal L-alpha-aminoacyl-[protein] = an N-terminal L-phenylalanyl-L-alpha-aminoacyl-[protein] + tRNA(Phe). Functionally, functions in the N-end rule pathway of protein degradation where it conjugates Leu, Phe and, less efficiently, Met from aminoacyl-tRNAs to the N-termini of proteins containing an N-terminal arginine or lysine. This Bordetella avium (strain 197N) protein is Leucyl/phenylalanyl-tRNA--protein transferase.